The primary structure comprises 205 residues: Urease accessory protein UreG (205 aa).

10–17 (GPVGAGKT) is a GTP binding site.

This sequence belongs to the SIMIBI class G3E GTPase family. UreG subfamily. As to quaternary structure, homodimer. UreD, UreF and UreG form a complex that acts as a GTP-hydrolysis-dependent molecular chaperone, activating the urease apoprotein by helping to assemble the nickel containing metallocenter of UreC. The UreE protein probably delivers the nickel.

The protein localises to the cytoplasm. Facilitates the functional incorporation of the urease nickel metallocenter. This process requires GTP hydrolysis, probably effectuated by UreG. In Corynebacterium glutamicum (strain ATCC 13032 / DSM 20300 / JCM 1318 / BCRC 11384 / CCUG 27702 / LMG 3730 / NBRC 12168 / NCIMB 10025 / NRRL B-2784 / 534), this protein is Urease accessory protein UreG.